The primary structure comprises 151 residues: Deoxyuridine 5'-triphosphate nucleotidohydrolase (151 aa).

Residues 70 to 72 (RSG), asparagine 83, 87 to 89 (LID), and methionine 97 contribute to the substrate site.

It belongs to the dUTPase family. In terms of assembly, homotrimer. It depends on Mg(2+) as a cofactor.

The catalysed reaction is dUTP + H2O = dUMP + diphosphate + H(+). It participates in pyrimidine metabolism; dUMP biosynthesis; dUMP from dCTP (dUTP route): step 2/2. This enzyme is involved in nucleotide metabolism: it produces dUMP, the immediate precursor of thymidine nucleotides and it decreases the intracellular concentration of dUTP so that uracil cannot be incorporated into DNA. This chain is Deoxyuridine 5'-triphosphate nucleotidohydrolase, found in Escherichia coli O45:K1 (strain S88 / ExPEC).